The sequence spans 198 residues: Acireductone dioxygenase (198 aa).

Residues His-97, His-99, Glu-103, and His-141 each contribute to the Fe(2+) site. Positions 97, 99, 103, and 141 each coordinate Ni(2+).

The protein belongs to the acireductone dioxygenase (ARD) family. As to quaternary structure, monomer. It depends on Fe(2+) as a cofactor. Ni(2+) is required as a cofactor.

The catalysed reaction is 1,2-dihydroxy-5-(methylsulfanyl)pent-1-en-3-one + O2 = 3-(methylsulfanyl)propanoate + CO + formate + 2 H(+). The enzyme catalyses 1,2-dihydroxy-5-(methylsulfanyl)pent-1-en-3-one + O2 = 4-methylsulfanyl-2-oxobutanoate + formate + 2 H(+). The protein operates within amino-acid biosynthesis; L-methionine biosynthesis via salvage pathway; L-methionine from S-methyl-5-thio-alpha-D-ribose 1-phosphate: step 5/6. Its function is as follows. Catalyzes 2 different reactions between oxygen and the acireductone 1,2-dihydroxy-3-keto-5-methylthiopentene (DHK-MTPene) depending upon the metal bound in the active site. Fe-containing acireductone dioxygenase (Fe-ARD) produces formate and 2-keto-4-methylthiobutyrate (KMTB), the alpha-ketoacid precursor of methionine in the methionine recycle pathway. Ni-containing acireductone dioxygenase (Ni-ARD) produces methylthiopropionate, carbon monoxide and formate, and does not lie on the methionine recycle pathway. The sequence is that of Acireductone dioxygenase from Synechococcus elongatus (strain ATCC 33912 / PCC 7942 / FACHB-805) (Anacystis nidulans R2).